Here is a 673-residue protein sequence, read N- to C-terminus: Protein kinase ORF74 (673 aa).

The Protein kinase domain occupies 128–404 (TDTDEAVARG…ARELLVYPRY (277 aa)). Residue D252 is the Proton acceptor of the active site. The segment at 340 to 364 (MDNDALDSRRTGRDGDPVNPEGFGT) is disordered. Over residues 345-355 (LDSRRTGRDGD) the composition is skewed to basic and acidic residues.

Belongs to the protein kinase superfamily. Ser/Thr protein kinase family.

The catalysed reaction is L-seryl-[protein] + ATP = O-phospho-L-seryl-[protein] + ADP + H(+). The enzyme catalyses L-threonyl-[protein] + ATP = O-phospho-L-threonyl-[protein] + ADP + H(+). This chain is Protein kinase ORF74 (ORF74), found in Ictalurid herpesvirus 1 (strain Auburn) (IcHV-1).